Consider the following 219-residue polypeptide: UPF0502 protein HCH_06091 (219 aa).

This sequence belongs to the UPF0502 family.

This is UPF0502 protein HCH_06091 from Hahella chejuensis (strain KCTC 2396).